Reading from the N-terminus, the 420-residue chain is DNA repair protein NreA (420 aa).

A PIP motif motif is present at residues Q413–A420.

The protein belongs to the Nre family. As to quaternary structure, interacts with the DNA polymerase sliding clamp (PCNA) via the PIP (PCNA-interacting peptide) motif.

Involved in DNA damage repair. Works together with the UvrABC proteins in repairing DNA damage resulting from exposure to the DNA damaging agent mitomycin C (MMC). The sequence is that of DNA repair protein NreA from Haloferax volcanii (strain ATCC 29605 / DSM 3757 / JCM 8879 / NBRC 14742 / NCIMB 2012 / VKM B-1768 / DS2) (Halobacterium volcanii).